Consider the following 268-residue polypeptide: Hydroxyethylthiazole kinase (268 aa).

Substrate is bound at residue Met-45. ATP contacts are provided by Arg-121 and Thr-167. Gly-194 contacts substrate.

This sequence belongs to the Thz kinase family. Mg(2+) is required as a cofactor.

It carries out the reaction 5-(2-hydroxyethyl)-4-methylthiazole + ATP = 4-methyl-5-(2-phosphooxyethyl)-thiazole + ADP + H(+). It participates in cofactor biosynthesis; thiamine diphosphate biosynthesis; 4-methyl-5-(2-phosphoethyl)-thiazole from 5-(2-hydroxyethyl)-4-methylthiazole: step 1/1. Its function is as follows. Catalyzes the phosphorylation of the hydroxyl group of 4-methyl-5-beta-hydroxyethylthiazole (THZ). This Bacillus cereus (strain Q1) protein is Hydroxyethylthiazole kinase.